The following is a 204-amino-acid chain: Carbon disulfide hydrolase (204 aa).

The Zn(2+) site is built by C35, H88, and C91.

It belongs to the beta-class carbonic anhydrase family. Forms a hexadecameric catenane homooligomer, through interactions of two interlocked octameric rings. Exists as both octamers and hexadecamers in solution. Requires Zn(2+) as cofactor.

It catalyses the reaction carbon disulfide + 2 H2O = 2 hydrogen sulfide + CO2 + 2 H(+). It functions in the pathway sulfur metabolism; hydrogen sulfide biosynthesis. In terms of biological role, catalyzes the conversion of carbon disulfide into hydrogen sulfide and carbon dioxide, with carbonyl sulfide as an intermediate. Likely plays a key role in sulfur metabolism that allows Acidianus sp. A1-3 to grow on carbon disulfide as the main carbon and energy source. Does not show carbonic anhydrase activity (hydration of CO(2) to carbonate). This chain is Carbon disulfide hydrolase, found in Acidianus sp. (strain A1-3).